Consider the following 383-residue polypeptide: Lipid-A-disaccharide synthase (383 aa).

The protein belongs to the LpxB family.

It carries out the reaction a lipid X + a UDP-2-N,3-O-bis[(3R)-3-hydroxyacyl]-alpha-D-glucosamine = a lipid A disaccharide + UDP + H(+). Its pathway is bacterial outer membrane biogenesis; LPS lipid A biosynthesis. Condensation of UDP-2,3-diacylglucosamine and 2,3-diacylglucosamine-1-phosphate to form lipid A disaccharide, a precursor of lipid A, a phosphorylated glycolipid that anchors the lipopolysaccharide to the outer membrane of the cell. This chain is Lipid-A-disaccharide synthase, found in Anaeromyxobacter sp. (strain K).